The following is a 229-amino-acid chain: Coiled-coil domain-containing protein 134 (229 aa).

An N-terminal signal peptide occupies residues 1–22; the sequence is MDLLQSLAVFFVLLLPGTEVTG. Residue Asn148 is glycosylated (N-linked (GlcNAc...) asparagine). Residues 191 to 229 are disordered; the sequence is PSTDPFQKALREEEKRRKKEEKRKEIRKGPRISRSQSEL. Residues 196–218 adopt a coiled-coil conformation; the sequence is FQKALREEEKRRKKEEKRKEIRK. Residues 226–229 carry the Prevents secretion from ER motif; the sequence is QSEL.

The protein belongs to the CCDC134 family. As to quaternary structure, interacts with TADA2A. Associates with the PCAF complex via TADA2A binding. In terms of processing, O-glycosylated, with additional sialic acid modifications.

It localises to the endoplasmic reticulum lumen. The protein resides in the secreted. The protein localises to the cytoplasm. It is found in the nucleus. Molecular adapter required to prevent protein hyperglycosylation of HSP90B1: during translation, associates with nascent HSP90B1 and the STT3A catalytic component of the OST-A complex and tethers them to a specialized translocon that forms a microenvironment for HSP90B1 folding. In the CCDC134-containing translocon, STT3A associates with the SRT pseudosubstrate motif of HSP90B1, preventing access to facultative glycosylation sites until folding is completed, preventing hyperglycosylation and subsequent degradation of HSP90B1. In extracellular secreted form, promotes proliferation and activation of CD8(+) T-cells, suggesting a cytokine-like function. May inhibit ERK and JNK signaling activity. May suppress cell migration and invasion activity, via its effects on ERK and JNK signaling. May also localize in the nucleus: enhances stability of the PCAF histone acetyltransferase (HAT) complex member TADA2A and thus promotes PCAF-mediated histone acetyltransferase activity. Has a critical role in the regulation of osteogenesis and bone development. This Rattus norvegicus (Rat) protein is Coiled-coil domain-containing protein 134 (Ccdc134).